We begin with the raw amino-acid sequence, 1572 residues long: Dynein axonemal assembly factor 8 (1572 aa).

4 disordered regions span residues 1–21 (MASE…NWSG), 262–304 (SEEV…HPQS), 324–428 (SLEQ…EILQ), and 849–871 (FQNP…SDSE). The span at 324–335 (SLEQNPENPSQR) shows a compositional bias: polar residues. Over residues 336–351 (NEQKEKHHLNKTDHTG) the composition is skewed to basic and acidic residues. The segment covering 361–374 (NIQNDSLSDANMSN) has biased composition (polar residues). Residues 409–426 (VGREEKDGREEQEKEKEI) show a composition bias toward basic and acidic residues. Polar residues predominate over residues 849–865 (FQNPYSRSTQPRSANLR). The interval 1249 to 1382 (TVLLLKPRIW…IRDIKTFFPE (134 aa)) is NDK.

As to quaternary structure, interacts with DNAI2. As to expression, expression is enriched in multiciliated cells in the epidermis and the nephrostomes of the pronephros.

The protein resides in the dynein axonemal particle. It localises to the cytoplasm. Its function is as follows. In cyliated cells, dynein axonemal particle-specific protein required for deployment of ODA to the axoneme. Interacts with outer dynein arm (ODA) subunits. This Xenopus laevis (African clawed frog) protein is Dynein axonemal assembly factor 8 (dnaaf8).